Here is a 122-residue protein sequence, read N- to C-terminus: Large ribosomal subunit protein uL14 (122 aa).

The protein belongs to the universal ribosomal protein uL14 family. In terms of assembly, part of the 50S ribosomal subunit. Forms a cluster with proteins L3 and L19. In the 70S ribosome, L14 and L19 interact and together make contacts with the 16S rRNA in bridges B5 and B8.

Its function is as follows. Binds to 23S rRNA. Forms part of two intersubunit bridges in the 70S ribosome. This Azorhizobium caulinodans (strain ATCC 43989 / DSM 5975 / JCM 20966 / LMG 6465 / NBRC 14845 / NCIMB 13405 / ORS 571) protein is Large ribosomal subunit protein uL14.